A 506-amino-acid polypeptide reads, in one-letter code: Galactose/methyl galactoside import ATP-binding protein MglA (506 aa).

2 consecutive ABC transporter domains span residues 14–249 and 260–506; these read LTMT…VGRE and VPKE…AKYL. 46 to 53 is an ATP binding site; it reads GENGAGKS.

The protein belongs to the ABC transporter superfamily. Galactose/methyl galactoside importer (TC 3.A.1.2.3) family. The complex is composed of one ATP-binding protein (MglA), two transmembrane proteins (MglC) and a solute-binding protein (MglB).

It localises to the cell inner membrane. It catalyses the reaction D-galactose(out) + ATP + H2O = D-galactose(in) + ADP + phosphate + H(+). The enzyme catalyses methyl beta-D-galactoside(out) + ATP + H2O = methyl beta-D-galactoside(in) + ADP + phosphate + H(+). Functionally, part of the ABC transporter complex MglABC involved in galactose/methyl galactoside import. Responsible for energy coupling to the transport system. This chain is Galactose/methyl galactoside import ATP-binding protein MglA, found in Haemophilus influenzae (strain 86-028NP).